The chain runs to 294 residues: Flavin-dependent thymidylate synthase (294 aa).

One can recognise a ThyX domain in the interval 27–250 (GFIRVIDYMG…PFTYEAFEEY (224 aa)). FAD contacts are provided by residues threonine 73, 96-98 (RHR), and glutamate 104. Residues 93 to 96 (QWIR), 104 to 108 (EYSAR), and arginine 189 contribute to the dUMP site. A ThyX motif motif is present at residues 96–106 (RHRTASVNEYS). Residues 205–207 (NLH) and histidine 211 each bind FAD. Arginine 216 lines the dUMP pocket. The active-site Involved in ionization of N3 of dUMP, leading to its activation is arginine 216.

The protein belongs to the thymidylate synthase ThyX family. In terms of assembly, homotetramer. It depends on FAD as a cofactor.

The enzyme catalyses dUMP + (6R)-5,10-methylene-5,6,7,8-tetrahydrofolate + NADPH + H(+) = dTMP + (6S)-5,6,7,8-tetrahydrofolate + NADP(+). Its pathway is pyrimidine metabolism; dTTP biosynthesis. In terms of biological role, catalyzes the reductive methylation of 2'-deoxyuridine-5'-monophosphate (dUMP) to 2'-deoxythymidine-5'-monophosphate (dTMP) while utilizing 5,10-methylenetetrahydrofolate (mTHF) as the methyl donor, and NADPH and FADH(2) as the reductant. This Rickettsia bellii (strain RML369-C) protein is Flavin-dependent thymidylate synthase.